The primary structure comprises 235 residues: DnaA regulatory inactivator Hda (235 aa).

Belongs to the DnaA family. HdA subfamily. In terms of assembly, the active form seems to be an ADP-bound monomer. Forms the RIDA complex (regulatory inactivation of DnaA) of ATP-DnaA, ADP-Hda and the DNA-loaded beta sliding clamp (dnaN).

Its function is as follows. Mediates the interaction of DNA replication initiator protein DnaA with DNA polymerase subunit beta sliding clamp (dnaN). Stimulates hydrolysis of ATP-DnaA to ADP-DnaA, rendering DnaA inactive for reinitiation, a process called regulatory inhibition of DnaA or RIDA. The protein is DnaA regulatory inactivator Hda of Yersinia pestis bv. Antiqua (strain Antiqua).